Consider the following 281-residue polypeptide: Type VI secretion system accessory component TagJ (281 aa).

In terms of assembly, interacts with TssB1 (via N-terminus). Interacts with ClpV1.

Component of the H1 type VI (H1-T6SS) secretion system that plays a role in the release of toxins targeting both eukaryotic and prokaryotic species. Forms a stable complex with TssB1. This complex, although not crucial for the H1-T6SS function, may fine-tune the assembly of the system. Plays a role in the interaction between ClpV1 and the TssC1/TssB1 sheath. The chain is Type VI secretion system accessory component TagJ from Pseudomonas aeruginosa (strain ATCC 15692 / DSM 22644 / CIP 104116 / JCM 14847 / LMG 12228 / 1C / PRS 101 / PAO1).